A 772-amino-acid chain; its full sequence is Calcium-binding mitochondrial carrier protein (772 aa).

An N-terminal domain region spans residues 1 to 377 (MFANRVRQAQ…SISDFEKSTG (377 aa)). 4 EF-hand domains span residues 132–165 (LDAD…ELMA), 166–201 (KPEA…SLDP), 235–270 (LQQE…VKLR), and 347–382 (ITPL…NINK). D145, D147, T149, Y151, E156, D179, D181, N183, Y185, and D190 together coordinate Ca(2+). Ca(2+) is bound by residues D360, N362, D364, K366, and D371. The tract at residues 378–422 (LNINKIGGGTNYSDSYPSDSHVTIQNSSTTPSPSTPITNTAAAIA) is linker loop domain. Residues 432–720 (AQQVLESIEN…KALLPDAEYK (289 aa)) form a carrier domain region. Solcar repeat units lie at residues 436–526 (LESI…LRDL), 535–616 (IYFP…MKTI), and 624–712 (LGPM…LQKA). 6 helical membrane passes run 442 to 459 (FALG…VYPI), 501 to 520 (GILP…LTVN), 545 to 558 (GFAG…TNPL), 591 to 610 (GAGA…FPTY), 630 to 647 (LLAG…VTPA), and 687 to 706 (GALA…LVSY). Residues 721 to 772 (PPTNAPITQKDFDVIRGNTNTVQRVIDMESKFGTLHQTRDNNKSSNGGENKN) form a C-terminal domain region. The disordered stretch occupies residues 751–772 (KFGTLHQTRDNNKSSNGGENKN). Positions 763-772 (KSSNGGENKN) are enriched in low complexity.

The protein belongs to the mitochondrial carrier (TC 2.A.29) family. In terms of assembly, homodimer (via N-terminus).

Its subcellular location is the mitochondrion inner membrane. Mitochondrial and calcium-binding carrier that catalyzes the calcium-dependent exchange of cytoplasmic glutamate with mitochondrial aspartate across the mitochondrial inner membrane. This chain is Calcium-binding mitochondrial carrier protein (mcfO), found in Dictyostelium discoideum (Social amoeba).